Here is a 215-residue protein sequence, read N- to C-terminus: UPF0502 protein YceH (215 aa).

It belongs to the UPF0502 family.

The chain is UPF0502 protein YceH from Salmonella paratyphi A (strain ATCC 9150 / SARB42).